A 291-amino-acid polypeptide reads, in one-letter code: Phycobilisome 32.1 kDa linker polypeptide, phycocyanin-associated, rod 1 (291 aa).

A PBS-linker domain is found at 2–179 (AITTAASRLG…LYRGYANSDR (178 aa)). Residues 236-288 (SKLFRVEITAISAPGYPKVRRSNKAVIVPFEQLNQTLQQINRLGGKVASITPA) form the CpcD-like domain.

Belongs to the phycobilisome linker protein family. Part of 2 PBS rod complexes, the conventional CpcG-PBS rod and a photosystem I-specific CpcL-PBS rod, both of which include ferredoxin--NADP reductase (petH). CpcG-PBS has on average 3 stacked phycocyanin hexamers (PC, CpcA and CpcB). Linker CpcG connects the PC stack to the thylakoid, the hexamers are linked by 1 copy of CpcC1, 1 copy of CpcC2 and the stack is terminated by a single copy of CpcD. The CpcL-PBS has on average 5 stacked phycocyanin hexamers (PC, CpcA and CpcB). Linker CpcL connects the PC stack to the thylakoid, the hexamers are linked by 1 copy of CpcC1, 3 copies of CpcC2 and the stack is terminated by a single copy of CpcD.

It is found in the cellular thylakoid membrane. Its function is as follows. Rod linker protein, connecting hexameric phycocyanin (PC, made by cpcA and cpcB) rods in the phycobilisome (PBS). PC is the major phycobiliprotein in PBS rods. Linker polypeptides determine the state of aggregation and the location of the disk-shaped phycobiliprotein units within the phycobilisome and modulate their spectroscopic properties in order to mediate a directed and optimal energy transfer. The polypeptide is Phycobilisome 32.1 kDa linker polypeptide, phycocyanin-associated, rod 1 (cpcC1) (Synechocystis sp. (strain ATCC 27184 / PCC 6803 / Kazusa)).